The following is a 199-amino-acid chain: Fe/S biogenesis protein NfuA (199 aa).

Residues C156 and C159 each contribute to the [4Fe-4S] cluster site.

It belongs to the NfuA family. As to quaternary structure, homodimer. [4Fe-4S] cluster serves as cofactor.

Its function is as follows. Involved in iron-sulfur cluster biogenesis. Binds a 4Fe-4S cluster, can transfer this cluster to apoproteins, and thereby intervenes in the maturation of Fe/S proteins. Could also act as a scaffold/chaperone for damaged Fe/S proteins. The protein is Fe/S biogenesis protein NfuA of Actinobacillus pleuropneumoniae serotype 5b (strain L20).